The chain runs to 60 residues: Large ribosomal subunit protein uL30 (60 aa).

This sequence belongs to the universal ribosomal protein uL30 family. Part of the 50S ribosomal subunit.

The chain is Large ribosomal subunit protein uL30 from Streptomyces coelicolor (strain ATCC BAA-471 / A3(2) / M145).